A 221-amino-acid chain; its full sequence is Very-long-chain (3R)-3-hydroxyacyl-CoA dehydratase PASTICCINO 2B (221 aa).

The Cytoplasmic portion of the chain corresponds to 1-11; sequence MTGVGSAVRRL. The chain crosses the membrane as a helical span at residues 12–32; that stretch reads YLSVYNWAVFFGWAQVLYYAV. The Lumenal portion of the chain corresponds to 33–51; it reads TTLLESGHEAVYAAVERPL. The helical transmembrane segment at 52–70 threads the bilayer; that stretch reads QFAQTAAFLEILHGLVGLV. Residues 71–76 lie on the Cytoplasmic side of the membrane; the sequence is RSPVSA. A helical transmembrane segment spans residues 77–95; that stretch reads TLPQIGSRLFLTWGILWSF. Over 96-100 the chain is Lumenal; it reads PETHS. A helical membrane pass occupies residues 101-121; it reads HILVTSLVISWSITEIIRYSF. The Cytoplasmic segment spans residues 122–141; the sequence is FGMKETFGFAPSWLLWLRYS. Residues 142-165 form a helical membrane-spanning segment; that stretch reads TFMVLYPTGISSEVGLIYIALPYM. Residues tyrosine 147 and glutamate 154 contribute to the active site. The Lumenal segment spans residues 166-184; the sequence is KATEKYCLRMPNKWNFSFD. A helical transmembrane segment spans residues 185-209; that stretch reads FSYASILSLAVYVPGSPHMFTYMLA. The Cytoplasmic portion of the chain corresponds to 210 to 221; sequence QRKKALAKAKAA.

The protein belongs to the very long-chain fatty acids dehydratase HACD family.

It is found in the endoplasmic reticulum membrane. The catalysed reaction is a very-long-chain (3R)-3-hydroxyacyl-CoA = a very-long-chain (2E)-enoyl-CoA + H2O. It participates in lipid metabolism; fatty acid biosynthesis. Functionally, catalyzes the third of the four reactions of the long-chain fatty acids elongation cycle. This endoplasmic reticulum-bound enzymatic process, allows the addition of two carbons to the chain of long- and very long-chain fatty acids/VLCFAs per cycle. This enzyme catalyzes the dehydration of the 3-hydroxyacyl-CoA intermediate into trans-2,3-enoyl-CoA, within each cycle of fatty acid elongation. Thereby, it participates in the production of VLCFAs of different chain lengths that are involved in multiple biological processes as precursors of membrane lipids and lipid mediators. May be an anti-phosphatase that prevents CDKA-1 dephosphorylation and activation. Involved in the hormonal control of cell division and differentiation. Required for proliferation control of meristematic and non-meristematic cells. Negative regulator of the cell cycle. The sequence is that of Very-long-chain (3R)-3-hydroxyacyl-CoA dehydratase PASTICCINO 2B (PAS2B) from Oryza sativa subsp. japonica (Rice).